Consider the following 268-residue polypeptide: uncharacterized protein (268 aa).

It to yeast YKR075c.

This is an uncharacterized protein from Saccharomyces cerevisiae (strain ATCC 204508 / S288c) (Baker's yeast).